We begin with the raw amino-acid sequence, 354 residues long: DNA integrity scanning protein DisA (354 aa).

A DAC domain is found at 6-144 (EKELKSILKL…GHIKYVLRDS (139 aa)). ATP-binding positions include Gly73, Leu91, and 104–108 (TRHRT).

The protein belongs to the DisA family. As to quaternary structure, homooctamer. Requires Mg(2+) as cofactor.

It carries out the reaction 2 ATP = 3',3'-c-di-AMP + 2 diphosphate. Its function is as follows. Participates in a DNA-damage check-point that is active prior to asymmetric division when DNA is damaged. DisA forms globular foci that rapidly scan along the chromosomes during sporulation, searching for lesions. When a lesion is present, DisA pauses at the lesion site. This triggers a cellular response that culminates in a temporary block in sporulation initiation. Also has diadenylate cyclase activity, catalyzing the condensation of 2 ATP molecules into cyclic di-AMP (c-di-AMP). c-di-AMP acts as a signaling molecule that couples DNA integrity with progression of sporulation. The rise in c-di-AMP level generated by DisA while scanning the chromosome, operates as a positive signal that advances sporulation; upon encountering a lesion, the DisA focus arrests at the damaged site and halts c-di-AMP synthesis. This is DNA integrity scanning protein DisA from Clostridium kluyveri (strain ATCC 8527 / DSM 555 / NBRC 12016 / NCIMB 10680 / K1).